A 146-amino-acid chain; its full sequence is Large ribosomal subunit protein uL15 (146 aa).

A disordered region spans residues 1 to 54 (MKLHELQPAAGSRKAPKRVGRGTGSGLGRNAGKGEKGQNARSGGGVRPGFEGGQ). Gly residues-rich tracts occupy residues 21 to 31 (RGTGSGLGRNA) and 42 to 52 (SGGGVRPGFEG).

This sequence belongs to the universal ribosomal protein uL15 family. Part of the 50S ribosomal subunit.

Its function is as follows. Binds to the 23S rRNA. This chain is Large ribosomal subunit protein uL15, found in Clostridium botulinum (strain Eklund 17B / Type B).